The primary structure comprises 807 residues: Glycerol-3-phosphate acyltransferase (807 aa).

An HXXXXD motif motif is present at residues 308-313; it reads CHRSHM.

This sequence belongs to the GPAT/DAPAT family.

The protein localises to the cell inner membrane. It catalyses the reaction sn-glycerol 3-phosphate + an acyl-CoA = a 1-acyl-sn-glycero-3-phosphate + CoA. It functions in the pathway phospholipid metabolism; CDP-diacylglycerol biosynthesis; CDP-diacylglycerol from sn-glycerol 3-phosphate: step 1/3. This chain is Glycerol-3-phosphate acyltransferase, found in Shewanella pealeana (strain ATCC 700345 / ANG-SQ1).